The primary structure comprises 501 residues: YVRPVSSWKVAVFEHQVIPPKTDMETREEALDALKLNSDVYHEAVLESRSKGVKMIVFPEYGLYDINTLTRTRMDLMAEKVPHPKHGHRNPCDEPEYQTQSSEMLRTFSCMAKENDMYMVVNMAGREPCRRATEPECPGDKQLLYNTNVAFNNEGDVVARYYKTHLFWEEGWFNSSKNYEMALWDTPIGKFGTFMCFDFQAVQLIEQYNVRHIAYPASWVNLPPIYQSIQSHSAFARFAKINLLAASVHRLETSTYGSGIYSPNGAEIFYFRPDIPKSKLLVAEILPIHVKKPEQTVVNFDNPVFPSEDDDVQDLFDRGDFAFLKYKRMTTRAGTVEVCQKSFCCKARYAVKDRFKEVYAVGVYDGLLSAGANNLYFQICTVIQCPHKKCGLKISKVRTHFKYLNLRADGWLDRYVFPSYTVMYNNYIALDPFVWNYTEAGGIETKPGTSTPLHSANLVARIYAKDSSKHVHQSHPIDEGVIKMAVKYMLYVMAAYVYAAS.

The CN hydrolase domain occupies Pro-20–Pro-287. Residue Glu-60 is the Proton acceptor of the active site. The Proton donor role is filled by Lys-163. Cys-196 functions as the Nucleophile in the catalytic mechanism. Cys-390 is subject to S-(coelenterazin-3a-yl)cysteine.

It belongs to the carbon-nitrogen hydrolase superfamily. BTD/VNN family. Photogenic gland (at protein level).

Its function is as follows. Monovalent ion-dependent bioluminescence photoprotein. Displays an emission peak at 470 nm (blue light). Trace amounts of monovalent ion trigger the intramolecular oxidation of the chromophore, didehydrocoelenterazine, with the emission of light. The polypeptide is Symplectin (Sthenoteuthis oualaniensis (Purpleback flying squid)).